A 212-amino-acid chain; its full sequence is Thymidylate kinase (212 aa).

10–17 (GLEGAGKT) lines the ATP pocket.

It belongs to the thymidylate kinase family.

The enzyme catalyses dTMP + ATP = dTDP + ADP. Phosphorylation of dTMP to form dTDP in both de novo and salvage pathways of dTTP synthesis. The chain is Thymidylate kinase from Photorhabdus laumondii subsp. laumondii (strain DSM 15139 / CIP 105565 / TT01) (Photorhabdus luminescens subsp. laumondii).